Reading from the N-terminus, the 165-residue chain is Crossover junction endodeoxyribonuclease RuvC (165 aa).

Residues aspartate 8, glutamate 69, and histidine 141 contribute to the active site. Mg(2+) contacts are provided by aspartate 8, glutamate 69, and histidine 141.

It belongs to the RuvC family. As to quaternary structure, homodimer which binds Holliday junction (HJ) DNA. The HJ becomes 2-fold symmetrical on binding to RuvC with unstacked arms; it has a different conformation from HJ DNA in complex with RuvA. In the full resolvosome a probable DNA-RuvA(4)-RuvB(12)-RuvC(2) complex forms which resolves the HJ. It depends on Mg(2+) as a cofactor.

It is found in the cytoplasm. It catalyses the reaction Endonucleolytic cleavage at a junction such as a reciprocal single-stranded crossover between two homologous DNA duplexes (Holliday junction).. In terms of biological role, the RuvA-RuvB-RuvC complex processes Holliday junction (HJ) DNA during genetic recombination and DNA repair. Endonuclease that resolves HJ intermediates. Cleaves cruciform DNA by making single-stranded nicks across the HJ at symmetrical positions within the homologous arms, yielding a 5'-phosphate and a 3'-hydroxyl group; requires a central core of homology in the junction. The consensus cleavage sequence is 5'-(A/T)TT(C/G)-3'. Cleavage occurs on the 3'-side of the TT dinucleotide at the point of strand exchange. HJ branch migration catalyzed by RuvA-RuvB allows RuvC to scan DNA until it finds its consensus sequence, where it cleaves and resolves the cruciform DNA. The protein is Crossover junction endodeoxyribonuclease RuvC of Wolbachia pipientis subsp. Culex pipiens (strain wPip).